Here is a 189-residue protein sequence, read N- to C-terminus: Large ribosomal subunit protein bL9 (189 aa).

Belongs to the bacterial ribosomal protein bL9 family.

In terms of biological role, binds to the 23S rRNA. This chain is Large ribosomal subunit protein bL9, found in Cereibacter sphaeroides (strain ATCC 17023 / DSM 158 / JCM 6121 / CCUG 31486 / LMG 2827 / NBRC 12203 / NCIMB 8253 / ATH 2.4.1.) (Rhodobacter sphaeroides).